We begin with the raw amino-acid sequence, 290 residues long: S-methyl-5'-thioadenosine phosphorylase (290 aa).

Phosphate contacts are provided by residues Ser11, 53 to 54, and 86 to 87; these read RH and SA. Residue Met184 participates in substrate binding. Thr185 contacts phosphate. Substrate is bound at residue 208–210; that stretch reads DYD.

This sequence belongs to the PNP/MTAP phosphorylase family. MTAP subfamily. In terms of assembly, homohexamer. Dimer of a homotrimer.

The catalysed reaction is S-methyl-5'-thioadenosine + phosphate = 5-(methylsulfanyl)-alpha-D-ribose 1-phosphate + adenine. Its pathway is amino-acid biosynthesis; L-methionine biosynthesis via salvage pathway; S-methyl-5-thio-alpha-D-ribose 1-phosphate from S-methyl-5'-thioadenosine (phosphorylase route): step 1/1. In terms of biological role, catalyzes the reversible phosphorylation of S-methyl-5'-thioadenosine (MTA) to adenine and 5-methylthioribose-1-phosphate. Involved in the breakdown of MTA, a major by-product of polyamine biosynthesis. Responsible for the first step in the methionine salvage pathway after MTA has been generated from S-adenosylmethionine. Has broad substrate specificity with 6-aminopurine nucleosides as preferred substrates. The polypeptide is S-methyl-5'-thioadenosine phosphorylase (Cereibacter sphaeroides (strain ATCC 17023 / DSM 158 / JCM 6121 / CCUG 31486 / LMG 2827 / NBRC 12203 / NCIMB 8253 / ATH 2.4.1.) (Rhodobacter sphaeroides)).